Consider the following 465-residue polypeptide: MPLNKKVLAIVLAGGEGNRLMPLTADRAKPGVPFAGSYRLIDFALSNLVNSRYLQIVVLTQYKSHSLDRHISETWRMSTQLGNYIASVPAQQRVGKSWFLGSANAIYQSLNLIHDANPDIVVVVGADHVYRMDFAQMVEQHVASGAKATVAAVRQPLNMADQFGVIEVDQENPQKIAAFVEKPSSTPGLAADPTQFLASMGNYVFDADALVDALHVDAERLDTKHDMGGDIIPYFVNKGEAGVYDFTLNDIPGSTERDRTYWRDVGTIDSFYDAHMDLISPMPVFNLYNSEWPIYTRQSISPPAKFVRGQGNTVGTALDSIVASGVVISGGIVEGSVLSNDVYVGTASRVVDSVLMDKVQIGEGAVVNRAIIDKNVKVPAGAAIGLDPERDRARGFKVTESGITVLSKGQAVPEPDEAERALSAANLHLVPNAIKAATENYPAARDSAAKVGEAHAAAVGVSSND.

Residues Gly164, 181-182 (EK), and Ser199 each bind alpha-D-glucose 1-phosphate.

It belongs to the bacterial/plant glucose-1-phosphate adenylyltransferase family. As to quaternary structure, homotetramer.

It catalyses the reaction alpha-D-glucose 1-phosphate + ATP + H(+) = ADP-alpha-D-glucose + diphosphate. The protein operates within glycan biosynthesis; glycogen biosynthesis. In terms of biological role, involved in the biosynthesis of ADP-glucose, a building block required for the elongation reactions to produce glycogen. Catalyzes the reaction between ATP and alpha-D-glucose 1-phosphate (G1P) to produce pyrophosphate and ADP-Glc. The polypeptide is Glucose-1-phosphate adenylyltransferase (Arthrobacter sp. (strain FB24)).